The following is a 259-amino-acid chain: HTH-type quorum sensing-dependent transcriptional regulator VjbR (259 aa).

Residues 76-179 (KNYFAIDPVF…AGIIHGTVCG (104 aa)) form a C12-HSL binding region. The HTH luxR-type domain maps to 183-248 (ANSVASLLTP…SAVATALSLG (66 aa)). The segment at residues 207-226 (DGEIAEILSIARWTVVTYLQ) is a DNA-binding region (H-T-H motif).

In terms of biological role, transcriptional regulator involved in the global control of Brucella gene expression. Mediates the effects of the quorum sensing autoinducer C12-HSL (N-dodecanoyl-homoserine lactone) on a large and diverse number of genes. In Brucella suis biovar 1 (strain 1330), this protein is HTH-type quorum sensing-dependent transcriptional regulator VjbR (vjbR).